A 353-amino-acid chain; its full sequence is 26S proteasome non-ATPase regulatory subunit 8 (353 aa).

Residues 1–25 are disordered; it reads MFIKGRAAKTPRGEPRRSSRGGRKL. Positions 165 to 334 constitute a PCI domain; the sequence is PSFERYMAQL…QQKPEDSTIP (170 aa). A Glycyl lysine isopeptide (Lys-Gly) (interchain with G-Cter in SUMO2) cross-link involves residue Lys-300.

Belongs to the proteasome subunit S14 family. In terms of assembly, component of the 19S proteasome regulatory particle complex. The 26S proteasome consists of a 20S core particle (CP) and two 19S regulatory subunits (RP). The regulatory particle is made of a lid composed of 9 subunits including PSMD8, a base containing 6 ATPases and few additional components. Interacts with DDI2. Interacts with TASOR. As to expression, expressed in the Sertoli cells of the testis.

Its function is as follows. Component of the 26S proteasome, a multiprotein complex involved in the ATP-dependent degradation of ubiquitinated proteins. This complex plays a key role in the maintenance of protein homeostasis by removing misfolded or damaged proteins, which could impair cellular functions, and by removing proteins whose functions are no longer required. Therefore, the proteasome participates in numerous cellular processes, including cell cycle progression, apoptosis, or DNA damage repair. The protein is 26S proteasome non-ATPase regulatory subunit 8 (Psmd8) of Mus musculus (Mouse).